The primary structure comprises 375 residues: Succinyl-diaminopimelate desuccinylase (375 aa).

H66 lines the Zn(2+) pocket. D68 is an active-site residue. D99 provides a ligand contact to Zn(2+). E133 acts as the Proton acceptor in catalysis. Zn(2+) is bound by residues E134, E162, and H348.

Belongs to the peptidase M20A family. DapE subfamily. Homodimer. Zn(2+) is required as a cofactor. Requires Co(2+) as cofactor.

It catalyses the reaction N-succinyl-(2S,6S)-2,6-diaminopimelate + H2O = (2S,6S)-2,6-diaminopimelate + succinate. It functions in the pathway amino-acid biosynthesis; L-lysine biosynthesis via DAP pathway; LL-2,6-diaminopimelate from (S)-tetrahydrodipicolinate (succinylase route): step 3/3. Catalyzes the hydrolysis of N-succinyl-L,L-diaminopimelic acid (SDAP), forming succinate and LL-2,6-diaminopimelate (DAP), an intermediate involved in the bacterial biosynthesis of lysine and meso-diaminopimelic acid, an essential component of bacterial cell walls. The protein is Succinyl-diaminopimelate desuccinylase of Yersinia pseudotuberculosis serotype O:1b (strain IP 31758).